The sequence spans 376 residues: NAD(P)H-quinone oxidoreductase subunit 1, chloroplastic (376 aa).

The next 9 membrane-spanning stretches (helical) occupy residues 27–47, 65–85, 97–117, 130–150, 166–186, 251–271, 272–292, 310–330, and 353–373; these read LISI…GVLV, PEYA…KLLI, WLFS…YLVV, LGIF…LIAG, AAQS…ISLL, GIKF…SSLF, AVVL…IFFI, LIIP…FIFF, and FLLP…LTLF.

This sequence belongs to the complex I subunit 1 family. As to quaternary structure, NDH is composed of at least 16 different subunits, 5 of which are encoded in the nucleus.

It is found in the plastid. The protein resides in the chloroplast thylakoid membrane. It carries out the reaction a plastoquinone + NADH + (n+1) H(+)(in) = a plastoquinol + NAD(+) + n H(+)(out). It catalyses the reaction a plastoquinone + NADPH + (n+1) H(+)(in) = a plastoquinol + NADP(+) + n H(+)(out). NDH shuttles electrons from NAD(P)H:plastoquinone, via FMN and iron-sulfur (Fe-S) centers, to quinones in the photosynthetic chain and possibly in a chloroplast respiratory chain. The immediate electron acceptor for the enzyme in this species is believed to be plastoquinone. Couples the redox reaction to proton translocation, and thus conserves the redox energy in a proton gradient. In Chara vulgaris (Common stonewort), this protein is NAD(P)H-quinone oxidoreductase subunit 1, chloroplastic.